Here is a 185-residue protein sequence, read N- to C-terminus: Protein-lysine palmitoyltransferase CyaC (185 aa).

Residues H33 and D102 contribute to the active site.

The protein belongs to the RTX toxin acyltransferase family. Homodimer.

It is found in the cytoplasm. The catalysed reaction is hexadecanoyl-[ACP] + L-lysyl-[protein] = N(6)-hexadecanoyl-L-lysyl-[protein] + holo-[ACP] + H(+). It catalyses the reaction (9Z)-hexadecenoyl-[ACP] + L-lysyl-[protein] = N(6)-[(9Z)-hexadecenoyl]-L-lysyl-[protein] + holo-[ACP] + H(+). In terms of biological role, protein-lysine palmitoyltransferase that catalyzes palmitoylation of the protoxin (CyaA) at two internal lysine residues, thereby converting it to the active toxin. The protein is Protein-lysine palmitoyltransferase CyaC of Bordetella bronchiseptica (strain ATCC BAA-588 / NCTC 13252 / RB50) (Alcaligenes bronchisepticus).